A 446-amino-acid chain; its full sequence is D(1A) dopamine receptor (446 aa).

At 1–23 (MRTLNTSTMDGTGLVVERDFSFR) the chain is on the extracellular side. N-linked (GlcNAc...) asparagine glycosylation occurs at Asn-5. The helical transmembrane segment at 24 to 49 (ILTACFLSLLILSTLLGNTLVCAAVI) threads the bilayer. Residues 50-60 (RFRHLRSKVTN) are Cytoplasmic-facing. A helical membrane pass occupies residues 61–87 (FFVISLAVSDLLVAVLVMPWKAVAEIA). Over 88–96 (GFWPFGSFC) the chain is Extracellular. Residues Cys-96 and Cys-186 are joined by a disulfide bond. A helical transmembrane segment spans residues 97–119 (NIWVAFDIMCSTASILNLCVISV). Topologically, residues 120–138 (DRYWAISSPFRYERKMTPK) are cytoplasmic. The helical transmembrane segment at 139–163 (AAFILISVAWTLSVLISFIPVQLSW) threads the bilayer. At 164–192 (HKAKPTSPSDGNVTSLGKTTHNCDSSLSR) the chain is on the extracellular side. A helical transmembrane segment spans residues 193–218 (TYAISSSLISFYIPVAIMIVTYTRIY). Over 219–272 (RIAQKQIRRISALERAAVHAKNCQTTAGNGNPAECSQPESSFKMSFKRETKVLK) the chain is Cytoplasmic. A helical transmembrane segment spans residues 273-299 (TLSVIMGVFVCCWLPFFILNCMVPFCG). The Extracellular segment spans residues 300-312 (SGETKPFCIDSIT). Residues 313 to 337 (FDVFVWFGWANSSLNPIIYAFNADF) form a helical membrane-spanning segment. Residues 338–446 (RKAFSTLLGC…PITQNGQHPT (109 aa)) lie on the Cytoplasmic side of the membrane. S-palmitoyl cysteine attachment occurs at residues Cys-347 and Cys-351.

This sequence belongs to the G-protein coupled receptor 1 family. As to quaternary structure, interacts with DNAJC14 via its C-terminus. Interacts with DRD2. Interacts with DORIP1.

It localises to the cell membrane. Its subcellular location is the endoplasmic reticulum membrane. The protein resides in the cell projection. It is found in the cilium membrane. The protein localises to the dendrite. It localises to the dendritic spine. Dopamine receptor whose activity is mediated by G proteins which activate adenylyl cyclase. In Sus scrofa (Pig), this protein is D(1A) dopamine receptor (DRD1).